The sequence spans 82 residues: Small ribosomal subunit protein uS17 (82 aa).

This sequence belongs to the universal ribosomal protein uS17 family. In terms of assembly, part of the 30S ribosomal subunit.

Functionally, one of the primary rRNA binding proteins, it binds specifically to the 5'-end of 16S ribosomal RNA. This Aeromonas hydrophila subsp. hydrophila (strain ATCC 7966 / DSM 30187 / BCRC 13018 / CCUG 14551 / JCM 1027 / KCTC 2358 / NCIMB 9240 / NCTC 8049) protein is Small ribosomal subunit protein uS17.